The primary structure comprises 377 residues: Chaperone protein DnaJ (377 aa).

A J domain is found at 5-70; that stretch reads DYYQVLGVSR…KKRSAYDQLG (66 aa). The CR-type zinc finger occupies 138–216; the sequence is GVTKIISFKT…CYGEGRYINT (79 aa). Residues cysteine 151, cysteine 154, cysteine 168, cysteine 171, cysteine 190, cysteine 193, cysteine 204, and cysteine 207 each contribute to the Zn(2+) site. 4 CXXCXGXG motif repeats span residues 151–158, 168–175, 190–197, and 204–211; these read CEACTGKG, CPTCRGSG, CQTCRGAG, and CTKCYGEG.

The protein belongs to the DnaJ family. In terms of assembly, homodimer. It depends on Zn(2+) as a cofactor.

Its subcellular location is the cytoplasm. Participates actively in the response to hyperosmotic and heat shock by preventing the aggregation of stress-denatured proteins and by disaggregating proteins, also in an autonomous, DnaK-independent fashion. Unfolded proteins bind initially to DnaJ; upon interaction with the DnaJ-bound protein, DnaK hydrolyzes its bound ATP, resulting in the formation of a stable complex. GrpE releases ADP from DnaK; ATP binding to DnaK triggers the release of the substrate protein, thus completing the reaction cycle. Several rounds of ATP-dependent interactions between DnaJ, DnaK and GrpE are required for fully efficient folding. Also involved, together with DnaK and GrpE, in the DNA replication of plasmids through activation of initiation proteins. This is Chaperone protein DnaJ from Orientia tsutsugamushi (strain Ikeda) (Rickettsia tsutsugamushi).